The sequence spans 596 residues: Protein NRT1/ PTR FAMILY 3.1 (596 aa).

Basic and acidic residues predominate over residues 1–16; it reads MEEQSKNKISEEEKQL. Residues 1 to 23 form a disordered region; it reads MEEQSKNKISEEEKQLHGRPNRP. Transmembrane regions (helical) follow at residues 27-47, 73-93, 98-118, 137-157, 185-205, 213-233, 334-354, 372-392, 416-436, 453-473, 497-517, and 542-562; these read LITM…VVGF, FAGT…SFAG, ITFA…SAII, TAQL…SGGI, NWYY…LVWI, LGLG…VGGF, MGPI…QGTF, IPAG…IIFY, MGIG…VEVK, IVPI…VAEA, ALFW…VTLV, and YFYW…LWCA.

Belongs to the major facilitator superfamily. Proton-dependent oligopeptide transporter (POT/PTR) (TC 2.A.17) family. In terms of tissue distribution, expressed in shoots, stems, leaves, flowers and siliques.

It localises to the membrane. Functionally, may act as an efflux-type nitrite transporter. Not regulated by the PII protein involved in the regulation of nitrite uptake into higher plant chloroplasts. In Arabidopsis thaliana (Mouse-ear cress), this protein is Protein NRT1/ PTR FAMILY 3.1 (NPF3.1).